The following is a 465-amino-acid chain: Cysteine--tRNA ligase (465 aa).

C27 provides a ligand contact to Zn(2+). The 'HIGH' region motif lies at 29–39 (PTVYDDAHLGH). Positions 207, 237, and 241 each coordinate Zn(2+). Residues 269-273 (KMSKS) carry the 'KMSKS' region motif. Residue K272 coordinates ATP.

Belongs to the class-I aminoacyl-tRNA synthetase family. Monomer. Zn(2+) serves as cofactor.

The protein localises to the cytoplasm. The catalysed reaction is tRNA(Cys) + L-cysteine + ATP = L-cysteinyl-tRNA(Cys) + AMP + diphosphate. The chain is Cysteine--tRNA ligase (cysS) from Helicobacter pylori (strain ATCC 700392 / 26695) (Campylobacter pylori).